A 1112-amino-acid chain; its full sequence is Mediator of RNA polymerase II transcription subunit 14 (1112 aa).

Disordered regions lie at residues 1 to 76, 120 to 141, and 1088 to 1112; these read MPGV…INES, SPHG…QSPE, and TNSA…ITID. Positions 20 to 39 are enriched in polar residues; it reads SPDNVSSTPFPQERVNQSGD. The segment covering 64-73 has biased composition (basic and acidic residues); that stretch reads IETHTGKDGI. Positions 1088-1099 are enriched in polar residues; it reads TNSAGARSSQQC.

Belongs to the Mediator complex subunit 14 family. Component of the Mediator complex.

The protein localises to the nucleus. Component of the Mediator complex, a coactivator involved in the regulated transcription of nearly all RNA polymerase II-dependent genes. Mediator functions as a bridge to convey information from gene-specific regulatory proteins to the basal RNA polymerase II transcription machinery. Mediator is recruited to promoters by direct interactions with regulatory proteins and serves as a scaffold for the assembly of a functional preinitiation complex with RNA polymerase II and the general transcription factors. In Aspergillus clavatus (strain ATCC 1007 / CBS 513.65 / DSM 816 / NCTC 3887 / NRRL 1 / QM 1276 / 107), this protein is Mediator of RNA polymerase II transcription subunit 14 (rgr1).